Consider the following 564-residue polypeptide: Hexose transporter HXT17 (564 aa).

Residues 1 to 12 show a composition bias toward basic and acidic residues; the sequence is MQSSTESDRDIQ. The tract at residues 1–22 is disordered; that stretch reads MQSSTESDRDIQDGPDADIHVA. At 1–52 the chain is on the cytoplasmic side; the sequence is MQSSTESDRDIQDGPDADIHVAPPVEKEWSDGFDDNEVINGDNVEPPKRGLI. Residues 53 to 73 form a helical membrane-spanning segment; that stretch reads GYLVIYLLCYPISFGGFLPGW. At 74–109 the chain is on the extracellular side; sequence DSGITAGFINMDNFKMNFGSYKHSTGEYYLSNVRMG. The helical transmembrane segment at 110 to 130 threads the bilayer; the sequence is LLVAMFSIGCAIGGLIFARLA. Residues 131–136 are Cytoplasmic-facing; that stretch reads DTLGRR. Residues 137-157 traverse the membrane as a helical segment; sequence LAIVIVVLVYMVGAIIQISSN. The Extracellular segment spans residues 158–167; sequence HKWYQYFVGK. The helical transmembrane segment at 168 to 188 threads the bilayer; sequence IIYGLGAGGCSVLCPMLLSEI. Residues 189–194 lie on the Cytoplasmic side of the membrane; sequence APTDLR. A helical membrane pass occupies residues 195–215; sequence GGLVSLYQLNMTFGIFLGYCS. At 216-229 the chain is on the extracellular side; it reads VYGTRKYDNTAQWR. The chain crosses the membrane as a helical span at residues 230–250; the sequence is VPLGLCFLWTLIIIIGMLLVP. At 251–333 the chain is on the cytoplasmic side; it reads ESPRYLIECE…VQTFLQLTGE (83 aa). Residues 334-350 form a helical membrane-spanning segment; the sequence is NYFFFYGTTIFKSVGLT. Over 351 to 356 the chain is Extracellular; the sequence is DGFETS. The chain crosses the membrane as a helical span at residues 357 to 374; the sequence is IVLGTVNFFSTIIAVMVV. Residues 375 to 381 lie on the Cytoplasmic side of the membrane; the sequence is DKIGRRK. Residues 382–402 form a helical membrane-spanning segment; it reads CLLFGAAGMMACMVIFASIGV. Over 403-424 the chain is Extracellular; the sequence is KCLYPHGQDGPSSKGAGNAMIV. A helical membrane pass occupies residues 425–445; the sequence is FTCFYIFCFATTWAPVAYIVV. Residues 446–462 are Cytoplasmic-facing; the sequence is AESFPSKVKSRAMSIST. A helical membrane pass occupies residues 463–483; the sequence is ACNWLWQFLIGFFTPFITGSI. A topological domain (extracellular) is located at residue His484. Residues 485–505 traverse the membrane as a helical segment; that stretch reads FYYGYVFVGCLVAMFLYVFFF. The Cytoplasmic segment spans residues 506–564; sequence LPETIGLSLEEIQLLYEEGIKPWKSASWVPPSRRGIPSEESKTEKKDWKKFLKFSKGSD.

It belongs to the major facilitator superfamily. Sugar transporter (TC 2.A.1.1) family.

It is found in the membrane. Probable glucose transporter. The sequence is that of Hexose transporter HXT17 (HXT17) from Saccharomyces cerevisiae (strain ATCC 204508 / S288c) (Baker's yeast).